A 168-amino-acid chain; its full sequence is Crossover junction endodeoxyribonuclease RuvC (168 aa).

Residues Asp8, Glu68, and Asp140 contribute to the active site. 3 residues coordinate Mg(2+): Asp8, Glu68, and Asp140.

This sequence belongs to the RuvC family. As to quaternary structure, homodimer which binds Holliday junction (HJ) DNA. The HJ becomes 2-fold symmetrical on binding to RuvC with unstacked arms; it has a different conformation from HJ DNA in complex with RuvA. In the full resolvosome a probable DNA-RuvA(4)-RuvB(12)-RuvC(2) complex forms which resolves the HJ. The cofactor is Mg(2+).

The protein resides in the cytoplasm. It carries out the reaction Endonucleolytic cleavage at a junction such as a reciprocal single-stranded crossover between two homologous DNA duplexes (Holliday junction).. Its function is as follows. The RuvA-RuvB-RuvC complex processes Holliday junction (HJ) DNA during genetic recombination and DNA repair. Endonuclease that resolves HJ intermediates. Cleaves cruciform DNA by making single-stranded nicks across the HJ at symmetrical positions within the homologous arms, yielding a 5'-phosphate and a 3'-hydroxyl group; requires a central core of homology in the junction. The consensus cleavage sequence is 5'-(A/T)TT(C/G)-3'. Cleavage occurs on the 3'-side of the TT dinucleotide at the point of strand exchange. HJ branch migration catalyzed by RuvA-RuvB allows RuvC to scan DNA until it finds its consensus sequence, where it cleaves and resolves the cruciform DNA. This Gluconacetobacter diazotrophicus (strain ATCC 49037 / DSM 5601 / CCUG 37298 / CIP 103539 / LMG 7603 / PAl5) protein is Crossover junction endodeoxyribonuclease RuvC.